The chain runs to 692 residues: Threonine--tRNA ligase (692 aa).

Residues 1-20 (MSAPAQPAPGVDGGDPSQAR) form a disordered region. In terms of domain architecture, TGS spans 1–74 (MSAPAQPAPG…DVDTDITPVA (74 aa)). The interval 269-575 (DHRKLGVELD…LTEHYAGAFP (307 aa)) is catalytic. Zn(2+) contacts are provided by cysteine 374, histidine 425, and histidine 552.

Belongs to the class-II aminoacyl-tRNA synthetase family. As to quaternary structure, homodimer. It depends on Zn(2+) as a cofactor.

It localises to the cytoplasm. It carries out the reaction tRNA(Thr) + L-threonine + ATP = L-threonyl-tRNA(Thr) + AMP + diphosphate + H(+). In terms of biological role, catalyzes the attachment of threonine to tRNA(Thr) in a two-step reaction: L-threonine is first activated by ATP to form Thr-AMP and then transferred to the acceptor end of tRNA(Thr). Also edits incorrectly charged L-seryl-tRNA(Thr). In Mycobacterium tuberculosis (strain CDC 1551 / Oshkosh), this protein is Threonine--tRNA ligase.